The following is a 243-amino-acid chain: Probable fructoselysine utilization operon transcriptional repressor (243 aa).

Positions 10 to 78 constitute an HTH gntR-type domain; sequence QLLYATVRQR…QGKGTFVQSQ (69 aa). Residues 38–57 constitute a DNA-binding region (H-T-H motif); that stretch reads ENELCTQYNVSRITIRKAIS.

It participates in carbohydrate metabolism; fructoselysine degradation [regulation]. Its function is as follows. May regulate the transcription of the frlABCDR operon, involved in the utilization of fructoselysine and psicoselysine. This chain is Probable fructoselysine utilization operon transcriptional repressor, found in Escherichia coli (strain K12).